Here is a 237-residue protein sequence, read N- to C-terminus: MNTEVMHSTSTESDAQEKPQAMFDTSAMRVLAVLAEKEALTPDSYPMSLNALTNGCNQLTSRDPVMAMGEDEVREILQHLIQEKFIAEVNQAGARVSKYEHRLRMKWSLEQDKLAVLTILMLRGIQTAGEIRNRSGRLHEFASIADVEAGLQFLMDKYPPLVVRLPRAPGTKEARYASLLCGESYPETAEGAAYAASAAAGVSRQDRIAQLEGEVGALREEVAALAAQLQQFRQQFE.

The segment covering 1-13 has biased composition (polar residues); sequence MNTEVMHSTSTES. The segment at 1 to 21 is disordered; it reads MNTEVMHSTSTESDAQEKPQA.

It belongs to the UPF0502 family.

The protein is UPF0502 protein HEAR1280 of Herminiimonas arsenicoxydans.